We begin with the raw amino-acid sequence, 159 residues long: Lipoprotein signal peptidase (159 aa).

3 helical membrane passes run 4-24, 64-84, and 88-108; these read PYFVSITLFITIAVLILDQVT, MSFFFIVTIVVLGLLVFFYIK, and GNFLMQVAISLLFAGALGNFI. Catalysis depends on residues aspartate 118 and aspartate 136. A helical transmembrane segment spans residues 131–151; the sequence is IFNGADSSLTIGVILVLIALL.

It belongs to the peptidase A8 family.

The protein localises to the cell membrane. The catalysed reaction is Release of signal peptides from bacterial membrane prolipoproteins. Hydrolyzes -Xaa-Yaa-Zaa-|-(S,diacylglyceryl)Cys-, in which Xaa is hydrophobic (preferably Leu), and Yaa (Ala or Ser) and Zaa (Gly or Ala) have small, neutral side chains.. Its pathway is protein modification; lipoprotein biosynthesis (signal peptide cleavage). This protein specifically catalyzes the removal of signal peptides from prolipoproteins. This is Lipoprotein signal peptidase from Staphylococcus carnosus (strain TM300).